Reading from the N-terminus, the 358-residue chain is 3-isopropylmalate dehydrogenase (358 aa).

76 to 89 (GPRWDNLTGAERPE) contributes to the NAD(+) binding site. Residues Arg96, Arg106, Arg135, and Asp225 each contribute to the substrate site. Positions 225, 249, and 253 each coordinate Mg(2+). 283 to 295 (GSAPDIAGQNKAN) contributes to the NAD(+) binding site.

This sequence belongs to the isocitrate and isopropylmalate dehydrogenases family. LeuB type 1 subfamily. Homodimer. Mg(2+) serves as cofactor. It depends on Mn(2+) as a cofactor.

Its subcellular location is the cytoplasm. It catalyses the reaction (2R,3S)-3-isopropylmalate + NAD(+) = 4-methyl-2-oxopentanoate + CO2 + NADH. The protein operates within amino-acid biosynthesis; L-leucine biosynthesis; L-leucine from 3-methyl-2-oxobutanoate: step 3/4. Catalyzes the oxidation of 3-carboxy-2-hydroxy-4-methylpentanoate (3-isopropylmalate) to 3-carboxy-4-methyl-2-oxopentanoate. The product decarboxylates to 4-methyl-2 oxopentanoate. In Oleidesulfovibrio alaskensis (strain ATCC BAA-1058 / DSM 17464 / G20) (Desulfovibrio alaskensis), this protein is 3-isopropylmalate dehydrogenase.